A 1574-amino-acid chain; its full sequence is MEIYGFSPLSFQDTESWKNSAFAACRGCKTYPIEEVGTDGSVRIRELPVGLVLKGVMAQYRSILWTQFVADPATTTVDRKSFDFWLFCRRAEAAQERAFRARQSKRAAKAAALDAEGLIDRSYKGRTYKVSVRGLSWKSVRAAQKAARKAAKNFGFTISENPFSALPSEGRSAFSAGETPAPPACALPNICWAARRASAKSASPADVESLPFLGLLPESPRLRNEGLLSLLRAKLADFKAARAPLVPIAKRVVKTPSEDSIWESVEKNAPIVGCVINGMVGIPKNPIIQRLLPERKYIARKCVRAFVPQVMCSSRHKHDFAQLRNPDKWIVFPSVIRISTVDAYATARRLGLINDCSSALERVKAFSSHHLDLEKEVSRLEREACAAPRKTIVARVFKFFFEEYALAYDEVVERLRAAKEDRRREHLAFLRNIKRQAHELELKERQSFLVAIEEARIKSLELKAKIEEGPPPQILYTPEWHVVQRAKAYADVTMSPSERDIAHLAYENKYVNARAYPNTDVAAKFRARCDAHFERIFGYAVHRGTRTETLTQVAESPPPIITAPVGQRVGGNPPTETPGAAAVRAAMRRAVERNRPGPGESSAMPAREPLLSHRGQYYARSLSDRYNNICSRNNAYDLMRETDVPIMEFTFGQQQDIAIPLSSRFGNHQSLHVGELEIAVQSSVLTGVDTAMAIMVSDASHDRLEEGFLSLTILRLGAGWMRHTIPIGITVFPTDPLVDRFLRLSVLTGGSPMADGRQVARLHYGLLGQAYTGAGEQRLTQYATRRINVRQTHVTQFLEGNHIHIARSEDRQQPLPHMSLEFRPLSGSTRYVARPGGYQAIESGRQSVDITQNFIRMPTHLTRSATDREETPAPNNPNEQNVGRSEINAEIPTNSAEEEERRRRTPHGSAIHRGYTEFSERNENLIEHLYVPSMHGLSLKEDIHLFTKNLEIPSTADFCKELARYSGLTEAMSYRGASYYSRLLSGVAILRPHFKFTFRLVTPILESIPLFVVWDDLGQLNTKVSLLSSAFQVIDSDHTRAAVYEVRPSGPTDLLTPSKANYGVGGDLVIFSGGYGSLSLSSPLRLKIEACLLKDTSLGSGEIALPQGPSSMLSFHYLNEVDLGDVNMHIFLGSCKYKSSSTVGGRKYISVCPAAGLVHKGGKAAYLGLGASLFSLYNFWKGSYVLKVDVLSKGSCAGAISIYIPPPGSSADHYSQSQLDTLPRYELPWRGSGSARFEVENFSWIGWHLTKPQRYITNEDWFSLNAGLLVVLNQPPTTRTGGSSDIRVIFRIVKFKNLTLKERSTTCDIFAGIKDSEYTDPLVDVLDENITAPSASSLTTVQDPDLGLETTSSAQTSGLTTTRSFGAYYAYLLGGESAGNRWHSYVLPITMGHHREMIGASKTGYLNTQLDETIRIRYSLRNPLHILCSAGAYYAVDLLFTLVVDGDHGAERAYTQLGLIQTPLMEYFDGYSASRNLSSEGGYSNQLGVGKSYVQLIVPRRNYRARSITTNTGALFFETIGSLTVKFAVSAKIKGVHLYVEPVGPIDVDGYGRGADISLTNENFVLMPSLRTAA.

Residues 361 to 422 are a coiled coil; that stretch reads ERVKAFSSHH…ERLRAAKEDR (62 aa). Disordered stretches follow at residues 557 to 579 and 863 to 916; these read PPPI…ETPG and RSAT…RGYT.

Post-translationally, specific enzymatic cleavages by RNA1 encoded picornain 3C-like protease in vivo yield mature proteins.

It localises to the host cell junction. Its subcellular location is the host plasmodesma. The protein resides in the virion. Transports viral genome to neighboring plant cells directly through plasmosdesmata, without any budding. The movement protein allows efficient cell to cell propagation, by bypassing the host cell wall barrier. Acts by forming a tubular structure at the host plasmodesmata, enlarging it enough to allow free passage of virion capsids. Functionally, capsid proteins form a capsid enclosing the viral positive strand RNA genome. Together they form an icosahedral capsid pseudo T=3 with a diameter of approximately 30 nm (Potential). The polypeptide is RNA2 polyprotein (Citrus unshiu (Satsuma mandarin)).